The primary structure comprises 296 residues: NAD kinase (296 aa).

The Proton acceptor role is filled by Asp-72. NAD(+) contacts are provided by residues 72–73 (DG), 146–147 (ND), Arg-157, Arg-174, Asp-176, 187–192 (TAYALS), and Gln-247.

This sequence belongs to the NAD kinase family. A divalent metal cation is required as a cofactor.

It localises to the cytoplasm. The enzyme catalyses NAD(+) + ATP = ADP + NADP(+) + H(+). Functionally, involved in the regulation of the intracellular balance of NAD and NADP, and is a key enzyme in the biosynthesis of NADP. Catalyzes specifically the phosphorylation on 2'-hydroxyl of the adenosine moiety of NAD to yield NADP. This is NAD kinase from Hahella chejuensis (strain KCTC 2396).